Consider the following 287-residue polypeptide: tRNA selenocysteine 1-associated protein 1 (287 aa).

2 RRM domains span residues 3–86 and 96–175; these read ASLW…YATY and YSLF…VAIP.

This sequence belongs to the RRM TRSPAP family. Component of the tRNA(Sec) complex composed at least of EEFSEC, SECISBP2, SEPHS1, SEPSECS, TRNAU1AP and tRNA(Sec). Found in a complex with tRNA(Sec). Interacts with SEPSECS. Associates with mRNP and/or polysomes. Found in a complex with EEFSEC, SECISBP2, TRNAU1AP and tRNA(Sec).

It localises to the nucleus. It is found in the cytoplasm. Involved in the early steps of selenocysteine biosynthesis and tRNA(Sec) charging to the later steps resulting in the cotranslational incorporation of selenocysteine into selenoproteins. Stabilizes the SECISBP2, EEFSEC and tRNA(Sec) complex. May be involved in the methylation of tRNA(Sec). Enhances efficiency of selenoproteins synthesis. In Bos taurus (Bovine), this protein is tRNA selenocysteine 1-associated protein 1 (TRNAU1AP).